Consider the following 1575-residue polypeptide: Ovochymase (1575 aa).

A signal peptide spans 1-19 (MIVTFVALALSCCTPQVTA). The region spanning 36–280 (IVGGEMAKLG…YSSWIANYTQ (245 aa)) is the Peptidase S1 1 domain. A disulfide bridge connects residues cysteine 61 and cysteine 77. Catalysis depends on charge relay system residues histidine 76 and aspartate 132. Cystine bridges form between cysteine 166–cysteine 233, cysteine 199–cysteine 212, and cysteine 223–cysteine 256. Residue serine 227 is the Charge relay system of the active site. Residues asparagine 277 and asparagine 303 are each glycosylated (N-linked (GlcNAc...) asparagine). 4 disulfides stabilise this stretch: cysteine 300/cysteine 330, cysteine 358/cysteine 386, cysteine 432/cysteine 460, and cysteine 486/cysteine 507. CUB domains are found at residues 300–423 (CSSN…FHAV) and 432–545 (CGGI…YYFS). Asparagine 497, asparagine 513, and asparagine 549 each carry an N-linked (GlcNAc...) asparagine glycan. Positions 575–810 (IVNGDIAIAG…YIDWIIATAN (236 aa)) constitute a Peptidase S1 2 domain. A disulfide bridge links cysteine 602 with cysteine 618. Residues histidine 617 and aspartate 665 each act as charge relay system in the active site. 3 disulfides stabilise this stretch: cysteine 700/cysteine 766, cysteine 730/cysteine 745, and cysteine 756/cysteine 786. Residue asparagine 748 is glycosylated (N-linked (GlcNAc...) asparagine). The active-site Charge relay system is the serine 760. N-linked (GlcNAc...) asparagine glycosylation occurs at asparagine 810. Disulfide bonds link cysteine 830–cysteine 859, cysteine 889–cysteine 913, cysteine 956–cysteine 984, cysteine 1012–cysteine 1034, cysteine 1080–cysteine 1108, cysteine 1135–cysteine 1158, and cysteine 1221–cysteine 1246. CUB domains lie at 830–949 (CIQL…YRLE), 956–1070 (CGQL…FVEL), 1080–1197 (CGGV…YTAV), and 1221–1341 (CQDS…YKLM). 4 N-linked (GlcNAc...) asparagine glycosylation sites follow: asparagine 968, asparagine 1027, asparagine 1087, and asparagine 1090. Asparagine 1273 carries an N-linked (GlcNAc...) asparagine glycan. Residues 1314–1575 (YNGGEISMLF…FLKWITKIIQ (262 aa)) form the Peptidase S1 3 domain. 2 disulfide bridges follow: cysteine 1376–cysteine 1392 and cysteine 1493–cysteine 1507. Asparagine 1511 is a glycosylation site (N-linked (GlcNAc...) asparagine).

Belongs to the peptidase S1 family. Expressed in the testis and ovary. Expressed in the gonads and gametes. Expressed in the follicle cells covering the vitelline coat of ovarian egg.

The protein resides in the secreted. Functionally, may be responsible for elevation of the vitelline coat at the late developmental stage of oogenesis and during fertilization in ovarian eggs. The polypeptide is Ovochymase (Halocynthia roretzi (Sea squirt)).